The chain runs to 484 residues: PTS system MurNAc-GlcNAc-specific EIIBC component (484 aa).

One can recognise a PTS EIIB type-1 domain in the interval 5-87 (QQLAERIIAA…AELSGVKLGD (83 aa)). Catalysis depends on Cys27, which acts as the Phosphocysteine intermediate; for EIIB activity. In terms of domain architecture, PTS EIIC type-1 spans 130-484 (KSIANIFIPL…AMRQTDLLGD (355 aa)). Transmembrane regions (helical) follow at residues 135-155 (IFIPLIPAFIGAGLIGGIAAV), 160-180 (MVAGYISGAWITQLITVFNVI), 200-220 (FGATPGLGGVIGGTTLLTGIA), 234-254 (LQPGQGGIIGVIFAVWILSIV), 274-294 (IALLIVGLLTIFIFMPLAGFV), 305-325 (IISIGGVFSGFIIGASFLPLV), 349-369 (LLPIAAMAGAGQVGAALALWV), 384-404 (ALPVGFLGIGEPLIYGVTLPL), 408-428 (FLTACIGGGIGGAVIGGIGHI), and 450-470 (LGYIAGLLAAYAGGFVCTYLF).

Its subcellular location is the cell membrane. It carries out the reaction N-acetyl-beta-D-muramate-(1-&gt;4)-N-acetyl-D-glucosamine(out) + N(pros)-phospho-L-histidyl-[protein] = 6-phospho-N-acetyl-beta-D-muramate-(1-&gt;4)-N-acetyl-D-glucosamine(in) + L-histidyl-[protein]. Its pathway is cell wall biogenesis; peptidoglycan recycling. The phosphoenolpyruvate-dependent sugar phosphotransferase system (sugar PTS), a major carbohydrate active transport system, catalyzes the phosphorylation of incoming sugar substrates concomitantly with their translocation across the cell membrane. This system is involved in the uptake and phosphorylation of MurNAc-GlcNAc, the principle peptidoglycan turnover product of S.aureus, yielding cytoplasmic MurNAc 6P-GlcNAc. This chain is PTS system MurNAc-GlcNAc-specific EIIBC component, found in Staphylococcus aureus (strain Mu50 / ATCC 700699).